Here is a 471-residue protein sequence, read N- to C-terminus: Glutamate--tRNA ligase (471 aa).

The 'HIGH' region motif lies at 9 to 19 (PSPTGYLHVGG). Residues C98, C100, C125, and H127 each contribute to the Zn(2+) site. The 'KMSKS' region signature appears at 237–241 (KLSKR). K240 is an ATP binding site.

The protein belongs to the class-I aminoacyl-tRNA synthetase family. Glutamate--tRNA ligase type 1 subfamily. Monomer. Zn(2+) is required as a cofactor.

Its subcellular location is the cytoplasm. The catalysed reaction is tRNA(Glu) + L-glutamate + ATP = L-glutamyl-tRNA(Glu) + AMP + diphosphate. Functionally, catalyzes the attachment of glutamate to tRNA(Glu) in a two-step reaction: glutamate is first activated by ATP to form Glu-AMP and then transferred to the acceptor end of tRNA(Glu). This is Glutamate--tRNA ligase from Salmonella arizonae (strain ATCC BAA-731 / CDC346-86 / RSK2980).